The chain runs to 514 residues: Putative transposase y4uI (514 aa).

Residues Val-11 to Leu-93 form the HTH IS408-type domain. The Integrase catalytic domain occupies His-128–Asp-317.

It belongs to the transposase IS21/IS408/IS1162 family.

This chain is Putative transposase y4uI, found in Sinorhizobium fredii (strain NBRC 101917 / NGR234).